We begin with the raw amino-acid sequence, 40 residues long: U2-myrmicitoxin-Tb1a (40 aa).

The signal sequence occupies residues 1–3 (AEA). Positions 4–29 (MAEAMADAMADAMADAMADAMAEAAA) are excised as a propeptide. An Arginine amide modification is found at Arg39.

Belongs to the formicidae venom precursor-01 superfamily. As to expression, expressed by the venom gland.

It is found in the secreted. Venom protein with unknown function. Does not induce paralysis when a high dose is administered by intrathoracic injection into the blowfly Lucilia caesar. The chain is U2-myrmicitoxin-Tb1a from Tetramorium bicarinatum (Tramp ant).